Here is a 292-residue protein sequence, read N- to C-terminus: Glycine--tRNA ligase alpha subunit (292 aa).

It belongs to the class-II aminoacyl-tRNA synthetase family. As to quaternary structure, tetramer of two alpha and two beta subunits.

The protein localises to the cytoplasm. The catalysed reaction is tRNA(Gly) + glycine + ATP = glycyl-tRNA(Gly) + AMP + diphosphate. This Pelotomaculum thermopropionicum (strain DSM 13744 / JCM 10971 / SI) protein is Glycine--tRNA ligase alpha subunit.